Here is an 893-residue protein sequence, read N- to C-terminus: TBC domain-containing protein kinase-like protein (893 aa).

Residues 1 to 274 (MFPLRDTEMG…EELMHDHLFS (274 aa)) form the Protein kinase domain. Residues 466–651 (DIPPLLRGIT…HLWDTLLLGN (186 aa)) enclose the Rab-GAP TBC domain. A Rhodanese domain is found at 790–889 (SKPKLLVVDI…IKPTGLLTVP (100 aa)).

Belongs to the protein kinase superfamily. As to quaternary structure, component of the FERRY complex.

It localises to the cytoplasm. It is found in the cytoskeleton. Its subcellular location is the spindle. The protein resides in the midbody. The protein localises to the early endosome. Functionally, component of the FERRY complex (Five-subunit Endosomal Rab5 and RNA/ribosome intermediary). The FERRY complex directly interacts with mRNAs and RAB5A, and functions as a RAB5A effector involved in the localization and the distribution of specific mRNAs most likely by mediating their endosomal transport. The complex recruits mRNAs and ribosomes to early endosomes through direct mRNA-interaction. Also involved in the modulation of mTOR signaling and expression of mTOR complex components. Involved in the control of actin-cytoskeleton organization. The polypeptide is TBC domain-containing protein kinase-like protein (Gallus gallus (Chicken)).